The following is a 204-amino-acid chain: Leucyl/phenylalanyl-tRNA--protein transferase (204 aa).

This sequence belongs to the L/F-transferase family.

The protein resides in the cytoplasm. The catalysed reaction is N-terminal L-lysyl-[protein] + L-leucyl-tRNA(Leu) = N-terminal L-leucyl-L-lysyl-[protein] + tRNA(Leu) + H(+). The enzyme catalyses N-terminal L-arginyl-[protein] + L-leucyl-tRNA(Leu) = N-terminal L-leucyl-L-arginyl-[protein] + tRNA(Leu) + H(+). It catalyses the reaction L-phenylalanyl-tRNA(Phe) + an N-terminal L-alpha-aminoacyl-[protein] = an N-terminal L-phenylalanyl-L-alpha-aminoacyl-[protein] + tRNA(Phe). Functionally, functions in the N-end rule pathway of protein degradation where it conjugates Leu, Phe and, less efficiently, Met from aminoacyl-tRNAs to the N-termini of proteins containing an N-terminal arginine or lysine. The polypeptide is Leucyl/phenylalanyl-tRNA--protein transferase (Brucella melitensis biotype 2 (strain ATCC 23457)).